Here is a 269-residue protein sequence, read N- to C-terminus: 4-hydroxy-tetrahydrodipicolinate reductase (269 aa).

Residues glycine 12–methionine 17, glycine 102–threonine 104, and serine 126–methionine 129 each bind NAD(+). Histidine 159 functions as the Proton donor/acceptor in the catalytic mechanism. Histidine 160 serves as a coordination point for (S)-2,3,4,5-tetrahydrodipicolinate. Lysine 163 functions as the Proton donor in the catalytic mechanism. Glycine 169–threonine 170 is a (S)-2,3,4,5-tetrahydrodipicolinate binding site.

Belongs to the DapB family.

The protein localises to the cytoplasm. The enzyme catalyses (S)-2,3,4,5-tetrahydrodipicolinate + NAD(+) + H2O = (2S,4S)-4-hydroxy-2,3,4,5-tetrahydrodipicolinate + NADH + H(+). It carries out the reaction (S)-2,3,4,5-tetrahydrodipicolinate + NADP(+) + H2O = (2S,4S)-4-hydroxy-2,3,4,5-tetrahydrodipicolinate + NADPH + H(+). The protein operates within amino-acid biosynthesis; L-lysine biosynthesis via DAP pathway; (S)-tetrahydrodipicolinate from L-aspartate: step 4/4. Catalyzes the conversion of 4-hydroxy-tetrahydrodipicolinate (HTPA) to tetrahydrodipicolinate. The protein is 4-hydroxy-tetrahydrodipicolinate reductase of Leptospira borgpetersenii serovar Hardjo-bovis (strain JB197).